Consider the following 500-residue polypeptide: L-arabinose isomerase (500 aa).

The Mn(2+) site is built by glutamate 306, glutamate 333, histidine 349, and histidine 448.

The protein belongs to the arabinose isomerase family. It depends on Mn(2+) as a cofactor.

It carries out the reaction beta-L-arabinopyranose = L-ribulose. The protein operates within carbohydrate degradation; L-arabinose degradation via L-ribulose; D-xylulose 5-phosphate from L-arabinose (bacterial route): step 1/3. Functionally, catalyzes the conversion of L-arabinose to L-ribulose. The protein is L-arabinose isomerase of Koribacter versatilis (strain Ellin345).